We begin with the raw amino-acid sequence, 203 residues long: MGSQWTKDNVYRKAMRDGYRARSAYKLIDINERFNVIRQTDNVVDLGAAPGSWLQVLKTMTEGQLCGVDLNPIIPLENVITITGDFTDPAIQAKIREAMPLVNVVVCDASPHLSGAKAYDQARVMGLNEEALNFASNLLKQGGNLVMKSFQGSDFNELLALVKEKFYSVRVIRSTATRRGSTECYIVAKNFIGDADDDRKKRE.

Residues Gly51, Trp53, Asp69, Asp85, and Asp108 each contribute to the S-adenosyl-L-methionine site. Lys148 serves as the catalytic Proton acceptor.

This sequence belongs to the class I-like SAM-binding methyltransferase superfamily. RNA methyltransferase RlmE family.

The protein resides in the cytoplasm. It catalyses the reaction uridine(2552) in 23S rRNA + S-adenosyl-L-methionine = 2'-O-methyluridine(2552) in 23S rRNA + S-adenosyl-L-homocysteine + H(+). Its function is as follows. Specifically methylates the uridine in position 2552 of 23S rRNA at the 2'-O position of the ribose in the fully assembled 50S ribosomal subunit. The chain is Ribosomal RNA large subunit methyltransferase E from Methanocorpusculum labreanum (strain ATCC 43576 / DSM 4855 / Z).